The chain runs to 374 residues: N-acetyldiaminopimelate deacetylase (374 aa).

The active site involves D69. E128 (proton acceptor) is an active-site residue.

The protein belongs to the peptidase M20A family. N-acetyldiaminopimelate deacetylase subfamily.

It catalyses the reaction N-acetyl-(2S,6S)-2,6-diaminopimelate + H2O = (2S,6S)-2,6-diaminopimelate + acetate. It participates in amino-acid biosynthesis; L-lysine biosynthesis via DAP pathway; LL-2,6-diaminopimelate from (S)-tetrahydrodipicolinate (acetylase route): step 3/3. Catalyzes the conversion of N-acetyl-diaminopimelate to diaminopimelate and acetate. This chain is N-acetyldiaminopimelate deacetylase (ykuR), found in Bacillus subtilis (strain 168).